Consider the following 273-residue polypeptide: Cytosolic sulfotransferase 4 (273 aa).

Position 74–79 (lysine 74–tryptophan 79) interacts with 3'-phosphoadenylyl sulfate. The active-site Proton acceptor is histidine 121. Residues arginine 143 and arginine 239–glycine 241 each bind 3'-phosphoadenylyl sulfate.

The protein belongs to the sulfotransferase 1 family.

Its subcellular location is the cytoplasm. Functionally, sulfotransferase that utilizes 3'-phospho-5'-adenylyl sulfate (PAPS) as sulfonate donor. This Arabidopsis thaliana (Mouse-ear cress) protein is Cytosolic sulfotransferase 4 (SOT4).